The following is an 898-amino-acid chain: Translation initiation factor IF-2 (898 aa).

Disordered regions lie at residues 51-70 and 114-303; these read RKSH…LKRK and LAAE…KQHG. Basic and acidic residues-rich tracts occupy residues 114-171 and 184-258; these read LAAE…EKSK and PAKE…DDKG. The region spanning 398-567 is the tr-type G domain; that stretch reads HRAPVVTIMG…LLQSELLELQ (170 aa). The G1 stretch occupies residues 407 to 414; that stretch reads GHVDHGKT. Residue 407 to 414 coordinates GTP; it reads GHVDHGKT. Positions 432-436 are G2; the sequence is GITQH. Positions 453-456 are G3; it reads DTPG. Residues 453–457 and 507–510 contribute to the GTP site; these read DTPGH and NKID. The segment at 507-510 is G4; it reads NKID. Residues 543–545 are G5; sequence SAH.

This sequence belongs to the TRAFAC class translation factor GTPase superfamily. Classic translation factor GTPase family. IF-2 subfamily.

Its subcellular location is the cytoplasm. Functionally, one of the essential components for the initiation of protein synthesis. Protects formylmethionyl-tRNA from spontaneous hydrolysis and promotes its binding to the 30S ribosomal subunits. Also involved in the hydrolysis of GTP during the formation of the 70S ribosomal complex. The sequence is that of Translation initiation factor IF-2 from Alcanivorax borkumensis (strain ATCC 700651 / DSM 11573 / NCIMB 13689 / SK2).